The following is a 691-amino-acid chain: Penicillin-binding protein 2D (691 aa).

The Cytoplasmic portion of the chain corresponds to 1–19 (MDAMTNKRLRLTLKTVRAF). Residues 20–40 (IFLGAFAALAAAAVFMTVILI) traverse the membrane as a helical; Signal-anchor for type II membrane protein segment. Over 41–691 (AKYQGAPSVQ…WWDKWLGRHH (651 aa)) the chain is Extracellular. The tract at residues 55–223 (TILYASDGSK…PSGYSPYVNE (169 aa)) is transglycosylase. The active-site Proton donor; for transglycosylase activity is the E94. Positions 327–605 (VGFSAIDPRT…AKTIWADFME (279 aa)) are transpeptidase. S365 acts as the Acyl-ester intermediate; for transpeptidase activity in catalysis. Residues 663–691 (AKQTKDRLPSKEKPASEKKWWDKWLGRHH) are disordered. A compositionally biased stretch (basic and acidic residues) spans 664–691 (KQTKDRLPSKEKPASEKKWWDKWLGRHH).

In the N-terminal section; belongs to the glycosyltransferase 51 family. The protein in the C-terminal section; belongs to the transpeptidase family.

It is found in the cell membrane. The enzyme catalyses [GlcNAc-(1-&gt;4)-Mur2Ac(oyl-L-Ala-gamma-D-Glu-L-Lys-D-Ala-D-Ala)](n)-di-trans,octa-cis-undecaprenyl diphosphate + beta-D-GlcNAc-(1-&gt;4)-Mur2Ac(oyl-L-Ala-gamma-D-Glu-L-Lys-D-Ala-D-Ala)-di-trans,octa-cis-undecaprenyl diphosphate = [GlcNAc-(1-&gt;4)-Mur2Ac(oyl-L-Ala-gamma-D-Glu-L-Lys-D-Ala-D-Ala)](n+1)-di-trans,octa-cis-undecaprenyl diphosphate + di-trans,octa-cis-undecaprenyl diphosphate + H(+). It catalyses the reaction Preferential cleavage: (Ac)2-L-Lys-D-Ala-|-D-Ala. Also transpeptidation of peptidyl-alanyl moieties that are N-acyl substituents of D-alanine.. Its pathway is cell wall biogenesis; peptidoglycan biosynthesis. Functionally, involved in the polymerization and cross-linking of spore peptidoglycan. May be required for synthesis of the spore germ cell wall, the first layer of peptidoglycan synthesized on the surface of the inner forespore membrane. This is Penicillin-binding protein 2D (pbpG) from Bacillus subtilis (strain 168).